The following is a 68-amino-acid chain: Protein SlyX homolog (68 aa).

This sequence belongs to the SlyX family.

The sequence is that of Protein SlyX homolog from Brucella melitensis biotype 1 (strain ATCC 23456 / CCUG 17765 / NCTC 10094 / 16M).